We begin with the raw amino-acid sequence, 356 residues long: Inositol phosphoceramide mannosyltransferase 3 (356 aa).

A helical membrane pass occupies residues 4-24 (ILFYFFFFLTLILSATVYLFG). N-linked (GlcNAc...) asparagine glycosylation is found at Asn52 and Asn146. 2 helical membrane-spanning segments follow: residues 197–217 (FPYL…IWSA) and 269–289 (WAIF…FIFG). A phosphoserine mark is found at Ser307, Ser353, and Ser355.

Belongs to the glycosyltransferase 32 family.

It is found in the endoplasmic reticulum membrane. It localises to the golgi apparatus. The protein resides in the cis-Golgi network membrane. The protein localises to the trans-Golgi network membrane. In terms of biological role, with imt1 and imt2, is required for the synthesis of mannosylinositol phosphoceramide (MIPC). Catalyzes the addition of mannosyl to inositol phosphoceramide (IPC). MIPC is essential for cell morphology, cell-surface distribution of ergosterol, localization for plasma-membrane transporters, and lipid-raft-mediated endocytosis of plasma membrane proteins to the vacuole. The chain is Inositol phosphoceramide mannosyltransferase 3 from Schizosaccharomyces pombe (strain 972 / ATCC 24843) (Fission yeast).